Here is a 256-residue protein sequence, read N- to C-terminus: UPF0246 protein SPO0106 (256 aa).

It belongs to the UPF0246 family.

In Ruegeria pomeroyi (strain ATCC 700808 / DSM 15171 / DSS-3) (Silicibacter pomeroyi), this protein is UPF0246 protein SPO0106.